Here is a 312-residue protein sequence, read N- to C-terminus: Protein-glutamate methylesterase/protein-glutamine glutaminase (312 aa).

A Response regulatory domain is found at 5–122 (RVLSVDDSAL…REGMLAYSEM (118 aa)). D56 carries the 4-aspartylphosphate modification. The region spanning 152-307 (LLSSEKLIAI…QQMLAKISAG (156 aa)) is the CheB-type methylesterase domain. Residues S164, H190, and D249 contribute to the active site.

It belongs to the CheB family. In terms of processing, phosphorylated by CheA. Phosphorylation of the N-terminal regulatory domain activates the methylesterase activity.

It localises to the cytoplasm. It carries out the reaction [protein]-L-glutamate 5-O-methyl ester + H2O = L-glutamyl-[protein] + methanol + H(+). The enzyme catalyses L-glutaminyl-[protein] + H2O = L-glutamyl-[protein] + NH4(+). Functionally, involved in chemotaxis. Part of a chemotaxis signal transduction system that modulates chemotaxis in response to various stimuli. Catalyzes the demethylation of specific methylglutamate residues introduced into the chemoreceptors (methyl-accepting chemotaxis proteins or MCP) by CheR. Also mediates the irreversible deamidation of specific glutamine residues to glutamic acid. The polypeptide is Protein-glutamate methylesterase/protein-glutamine glutaminase (Shigella boydii serotype 4 (strain Sb227)).